A 232-amino-acid polypeptide reads, in one-letter code: Uracil-DNA glycosylase (232 aa).

The active-site Proton acceptor is Asp-70.

This sequence belongs to the uracil-DNA glycosylase (UDG) superfamily. UNG family.

It is found in the cytoplasm. The enzyme catalyses Hydrolyzes single-stranded DNA or mismatched double-stranded DNA and polynucleotides, releasing free uracil.. Its function is as follows. Excises uracil residues from the DNA which can arise as a result of misincorporation of dUMP residues by DNA polymerase or due to deamination of cytosine. This is Uracil-DNA glycosylase from Campylobacter fetus subsp. fetus (strain 82-40).